A 237-amino-acid chain; its full sequence is Phosphoribosylaminoimidazole-succinocarboxamide synthase (237 aa).

Belongs to the SAICAR synthetase family.

It catalyses the reaction 5-amino-1-(5-phospho-D-ribosyl)imidazole-4-carboxylate + L-aspartate + ATP = (2S)-2-[5-amino-1-(5-phospho-beta-D-ribosyl)imidazole-4-carboxamido]succinate + ADP + phosphate + 2 H(+). Its pathway is purine metabolism; IMP biosynthesis via de novo pathway; 5-amino-1-(5-phospho-D-ribosyl)imidazole-4-carboxamide from 5-amino-1-(5-phospho-D-ribosyl)imidazole-4-carboxylate: step 1/2. The polypeptide is Phosphoribosylaminoimidazole-succinocarboxamide synthase (Listeria monocytogenes serotype 4b (strain CLIP80459)).